The sequence spans 47 residues: Putative glycosylation-dependent cell adhesion molecule 1 (47 aa).

The first 18 residues, 1–18 (MKFFMVLLPASLASTSLA), serve as a signal peptide directing secretion.

It belongs to the PP3/GlyCAM-1 family. Expressed in cells harvested from milk of lactating women. Not found in other tissues.

This chain is Putative glycosylation-dependent cell adhesion molecule 1 (GLYCAM1), found in Homo sapiens (Human).